Reading from the N-terminus, the 242-residue chain is ATP synthase subunit 4, mitochondrial (242 aa).

Residues methionine 1–histidine 35 constitute a mitochondrion transit peptide.

It belongs to the eukaryotic ATPase B chain family. In terms of assembly, F-type ATPases have 2 components, CF(1) - the catalytic core - and CF(0) - the membrane proton channel. In yeast, the dimeric form of ATP synthase consists of 17 polypeptides: alpha, beta, gamma, delta, epsilon, 4 (B), 5 (OSCP), 6 (A), 8, 9 (C), d, E (Tim11), f, g, h, i/j and k.

Its subcellular location is the mitochondrion. It localises to the mitochondrion inner membrane. In terms of biological role, mitochondrial membrane ATP synthase (F(1)F(0) ATP synthase or Complex V) produces ATP from ADP in the presence of a proton gradient across the membrane which is generated by electron transport complexes of the respiratory chain. F-type ATPases consist of two structural domains, F(1) - containing the extramembraneous catalytic core, and F(0) - containing the membrane proton channel, linked together by a central stalk and a peripheral stalk. During catalysis, ATP synthesis in the catalytic domain of F(1) is coupled via a rotary mechanism of the central stalk subunits to proton translocation. Part of the complex F(0) domain and the peripheric stalk, which acts as a stator to hold the catalytic alpha(3)beta(3) subcomplex and subunit a/ATP6 static relative to the rotary elements. This is ATP synthase subunit 4, mitochondrial (ATP4) from Candida glabrata (strain ATCC 2001 / BCRC 20586 / JCM 3761 / NBRC 0622 / NRRL Y-65 / CBS 138) (Yeast).